The chain runs to 401 residues: 8-amino-7-oxononanoate synthase (401 aa).

Substrate is bound at residue Arg-24. Residue 111–112 coordinates pyridoxal 5'-phosphate; sequence GF. Substrate is bound at residue His-137. 3 residues coordinate pyridoxal 5'-phosphate: Ser-183, His-211, and Thr-240. Lys-243 carries the N6-(pyridoxal phosphate)lysine modification. Residue Thr-357 participates in substrate binding.

The protein belongs to the class-II pyridoxal-phosphate-dependent aminotransferase family. BioF subfamily. Homodimer. Requires pyridoxal 5'-phosphate as cofactor.

The catalysed reaction is 6-carboxyhexanoyl-[ACP] + L-alanine + H(+) = (8S)-8-amino-7-oxononanoate + holo-[ACP] + CO2. The protein operates within cofactor biosynthesis; biotin biosynthesis. In terms of biological role, catalyzes the decarboxylative condensation of pimeloyl-[acyl-carrier protein] and L-alanine to produce 8-amino-7-oxononanoate (AON), [acyl-carrier protein], and carbon dioxide. This is 8-amino-7-oxononanoate synthase from Xanthomonas campestris pv. campestris (strain 8004).